Here is a 268-residue protein sequence, read N- to C-terminus: 4-hydroxy-tetrahydrodipicolinate reductase (268 aa).

Residues 10 to 15 (GSTGRM), Glu-36, 99 to 101 (GTT), and 123 to 126 (APNM) each bind NAD(+). Catalysis depends on His-156, which acts as the Proton donor/acceptor. (S)-2,3,4,5-tetrahydrodipicolinate is bound at residue His-157. The Proton donor role is filled by Lys-160. Residue 166-167 (GT) participates in (S)-2,3,4,5-tetrahydrodipicolinate binding.

The protein belongs to the DapB family.

Its subcellular location is the cytoplasm. It catalyses the reaction (S)-2,3,4,5-tetrahydrodipicolinate + NAD(+) + H2O = (2S,4S)-4-hydroxy-2,3,4,5-tetrahydrodipicolinate + NADH + H(+). The catalysed reaction is (S)-2,3,4,5-tetrahydrodipicolinate + NADP(+) + H2O = (2S,4S)-4-hydroxy-2,3,4,5-tetrahydrodipicolinate + NADPH + H(+). The protein operates within amino-acid biosynthesis; L-lysine biosynthesis via DAP pathway; (S)-tetrahydrodipicolinate from L-aspartate: step 4/4. Functionally, catalyzes the conversion of 4-hydroxy-tetrahydrodipicolinate (HTPA) to tetrahydrodipicolinate. This chain is 4-hydroxy-tetrahydrodipicolinate reductase, found in Nitrosomonas europaea (strain ATCC 19718 / CIP 103999 / KCTC 2705 / NBRC 14298).